A 111-amino-acid chain; its full sequence is Heavy metal-associated isoprenylated plant protein 10 (111 aa).

One can recognise an HMA domain in the interval 1 to 68 (MQETVVFEWG…ICDYVDITAV (68 aa)). Positions 68–111 (VGPEGQPAQNRNPVKKPEPKVIRGRPYPPQKKTPGKNSDECIIL) are disordered. Cysteine 108 is subject to Cysteine methyl ester. The S-farnesyl cysteine moiety is linked to residue cysteine 108. The propeptide at 109-111 (IIL) is removed in mature form.

It belongs to the HIPP family.

Functionally, probable heavy-metal-binding protein. The protein is Heavy metal-associated isoprenylated plant protein 10 of Arabidopsis thaliana (Mouse-ear cress).